Consider the following 321-residue polypeptide: Necdin (321 aa).

Residues 1–96 (MSEQSKDLSD…QPGPAPPAPA (96 aa)) form a disordered region. Residues 20-35 (SEVHSSPGVSEGVPPS) are compositionally biased toward low complexity. Positions 98–297 (LVQKAHELMW…QAWPSRYREA (200 aa)) constitute an MAGE domain.

As to quaternary structure, binds to the transactivation domains of E2F1 and p53. Binds also SV40 large T antigen and adenovirus E1A. Interacts with nucleobindin 1 and 2. Almost ubiquitous. Detected in fetal brain, lung, liver and kidney; in adult heart, brain, placenta, lung, liver, skeletal muscle, kidney, pancreas, spleen, thymus, prostate, testis, ovary, small intestine and colon. Not detected in peripheral blood leukocytes. In brain, restricted to post-mitotic neurons.

The protein resides in the perikaryon. Its subcellular location is the nucleus. Its function is as follows. Growth suppressor that facilitates the entry of the cell into cell cycle arrest. Functionally similar to the retinoblastoma protein it binds to and represses the activity of cell-cycle-promoting proteins such as SV40 large T antigen, adenovirus E1A, and the transcription factor E2F. Necdin also interacts with p53 and works in an additive manner to inhibit cell growth. Also functions as a transcription factor and directly binds to specific guanosine-rich DNA sequences. In Homo sapiens (Human), this protein is Necdin (NDN).